The following is a 202-amino-acid chain: UPF0126 membrane protein YvgT (202 aa).

6 helical membrane-spanning segments follow: residues 3–23 (WELLSVIGIIAFAVSGAIVAM), 26–46 (EYDILGVYILGIVTAFGGGAI), 63–83 (AYFQIALLSITIVFLFPKLLL), 90–110 (GNLSDAIGLAAFAIQGALYAV), 113–133 (GHPLSAVIVAAVLTGSGGGII), and 160–180 (IVGLGWLGNSFGLYVLFFVLV).

It belongs to the UPF0126 family.

It localises to the cell membrane. This Bacillus subtilis (strain 168) protein is UPF0126 membrane protein YvgT (yvgT).